A 297-amino-acid chain; its full sequence is 33 kDa chaperonin (297 aa).

2 disulfide bridges follow: cysteine 232–cysteine 234 and cysteine 266–cysteine 269.

Belongs to the HSP33 family. Post-translationally, under oxidizing conditions two disulfide bonds are formed involving the reactive cysteines. Under reducing conditions zinc is bound to the reactive cysteines and the protein is inactive.

The protein resides in the cytoplasm. Redox regulated molecular chaperone. Protects both thermally unfolding and oxidatively damaged proteins from irreversible aggregation. Plays an important role in the bacterial defense system toward oxidative stress. The protein is 33 kDa chaperonin of Azotobacter vinelandii (strain DJ / ATCC BAA-1303).